The primary structure comprises 267 residues: Regulatory protein VirG (267 aa).

The region spanning 29-143 is the Response regulatory domain; the sequence is HVLLVDDDVA…EFLARIRVAL (115 aa). Asp78 carries the 4-aspartylphosphate modification. Residues 155-255 constitute a DNA-binding region (ompR/PhoB-type); sequence RRSFCFTDWT…ARGAGYFFDA (101 aa).

In terms of processing, phosphorylated by wide host range (WHR) VirA protein.

It localises to the cytoplasm. VirG is required for the positive regulation of at least two vir loci encoded by the Ti plasmid of A.tumefaciens. This is Regulatory protein VirG (virG) from Rhizobium radiobacter (Agrobacterium tumefaciens).